A 380-amino-acid polypeptide reads, in one-letter code: 3-dehydroquinate synthase (380 aa).

Residues 100 to 104 (GAASD), 124 to 125 (TT), K137, and K146 each bind NAD(+). Zn(2+)-binding residues include E179, H251, and H267. The interval 320-343 (YMQRDKKNMQSNDTDSDKDSREMP) is disordered.

This sequence belongs to the sugar phosphate cyclases superfamily. Dehydroquinate synthase family. NAD(+) is required as a cofactor. Requires Co(2+) as cofactor. Zn(2+) serves as cofactor.

The protein localises to the cytoplasm. The enzyme catalyses 7-phospho-2-dehydro-3-deoxy-D-arabino-heptonate = 3-dehydroquinate + phosphate. Its pathway is metabolic intermediate biosynthesis; chorismate biosynthesis; chorismate from D-erythrose 4-phosphate and phosphoenolpyruvate: step 2/7. Functionally, catalyzes the conversion of 3-deoxy-D-arabino-heptulosonate 7-phosphate (DAHP) to dehydroquinate (DHQ). The sequence is that of 3-dehydroquinate synthase from Tropheryma whipplei (strain Twist) (Whipple's bacillus).